Here is an 88-residue protein sequence, read N- to C-terminus: MTLFSSISSMSSSMTSSKSSFASFGNGTRVSSNSIACSVDCDGKGVSSGSDLTGGAKSGGDCGGKGRPNNHGHGHENCHGGKGPGNSC.

A compositionally biased stretch (low complexity) spans 1 to 24; that stretch reads MTLFSSISSMSSSMTSSKSSFASF. Disordered regions lie at residues 1–25 and 45–88; these read MTLFSSISSMSSSMTSSKSSFASFG and GVSS…GNSC. Positions 56–66 are enriched in gly residues; it reads AKSGGDCGGKG.

This sequence belongs to the hssA/B family.

In Dictyostelium discoideum (Social amoeba), this protein is HssA/B-like protein 64 (hssl64).